The following is a 254-amino-acid chain: Pimeloyl-[acyl-carrier protein] methyl ester esterase (254 aa).

The region spanning 16 to 242 (LVLIHGWGMN…ASHAPFISHP (227 aa)) is the AB hydrolase-1 domain. Residues tryptophan 22, 82–83 (SL), and 143–147 (FLALQ) each bind substrate. The Nucleophile role is filled by serine 82. Catalysis depends on residues aspartate 207 and histidine 235. Histidine 235 is a substrate binding site.

This sequence belongs to the AB hydrolase superfamily. Carboxylesterase BioH family. Monomer.

It localises to the cytoplasm. It catalyses the reaction 6-carboxyhexanoyl-[ACP] methyl ester + H2O = 6-carboxyhexanoyl-[ACP] + methanol + H(+). The protein operates within cofactor biosynthesis; biotin biosynthesis. In terms of biological role, the physiological role of BioH is to remove the methyl group introduced by BioC when the pimeloyl moiety is complete. It allows to synthesize pimeloyl-ACP via the fatty acid synthetic pathway through the hydrolysis of the ester bonds of pimeloyl-ACP esters. The protein is Pimeloyl-[acyl-carrier protein] methyl ester esterase of Photobacterium profundum (strain SS9).